We begin with the raw amino-acid sequence, 633 residues long: Chaperone protein dnaK2 (633 aa).

Residue Thr-197 is modified to Phosphothreonine; by autocatalysis. Positions 513–532 are enriched in basic and acidic residues; that stretch reads AEQNASSDKERREKIERKNQ. Disordered regions lie at residues 513–534 and 598–633; these read AEQN…NQAD and QQAG…TETK. The span at 606–619 shows a compositional bias: low complexity; it reads PGAAPQDGGTTSSD. A compositionally biased stretch (acidic residues) spans 620-633; sequence GGDDVIDADFTETK.

It belongs to the heat shock protein 70 family.

Its function is as follows. Acts as a chaperone. The chain is Chaperone protein dnaK2 (dnaK2) from Nostoc sp. (strain PCC 7120 / SAG 25.82 / UTEX 2576).